A 519-amino-acid polypeptide reads, in one-letter code: Probable DNA ligase (519 aa).

Residue Glu211 coordinates ATP. Lys213 acts as the N6-AMP-lysine intermediate in catalysis. ATP contacts are provided by Arg218, Arg233, Glu262, Phe302, Arg374, and Lys380.

Belongs to the ATP-dependent DNA ligase family. Requires Mg(2+) as cofactor.

The catalysed reaction is ATP + (deoxyribonucleotide)n-3'-hydroxyl + 5'-phospho-(deoxyribonucleotide)m = (deoxyribonucleotide)n+m + AMP + diphosphate.. In terms of biological role, DNA ligase that seals nicks in double-stranded DNA during DNA replication, DNA recombination and DNA repair. The protein is Probable DNA ligase of Anaeromyxobacter sp. (strain Fw109-5).